A 275-amino-acid chain; its full sequence is MELSDISFPVTSADDFYDDPCFNTSDMHFFEDLDPRLVHVGLLKPDDHHYNEDEHIRAPSGHHQAGRCLLWACKACKRKTTNSDRRKAATMRERRRLGKVNDAFENLKRCTSNNPNQRLPKVEILRNAISYIESLQSLLRGQDGENYYPVLEHYSGDSDASSPQSNCSDGMMDYNAPTCTSARRSNYDSSYFAETPNADSRSNKNAAVSSLDCLSNIVERISTDTSACTVLSGQEGSEGSPCSPQEGSILSRNGGTVPSPTNCPQPSHDPIYQVL.

Positions 84–135 (DRRKAATMRERRRLGKVNDAFENLKRCTSNNPNQRLPKVEILRNAISYIESL) constitute a bHLH domain. Positions 232–265 (SGQEGSEGSPCSPQEGSILSRNGGTVPSPTNCPQ) are enriched in polar residues. Residues 232 to 275 (SGQEGSEGSPCSPQEGSILSRNGGTVPSPTNCPQPSHDPIYQVL) are disordered.

In terms of assembly, efficient DNA binding requires dimerization with another bHLH protein.

It localises to the nucleus. In terms of biological role, may act as a transcriptional activator that promotes transcription of muscle-specific target genes and plays a role in muscle differentiation. This is Myoblast determination protein 1 homolog 2 (myod2) from Oncorhynchus mykiss (Rainbow trout).